Here is a 486-residue protein sequence, read N- to C-terminus: N-succinylglutamate 5-semialdehyde dehydrogenase (486 aa).

220–225 (GSSRTG) contributes to the NAD(+) binding site. Residues glutamate 243 and cysteine 277 contribute to the active site.

The protein belongs to the aldehyde dehydrogenase family. AstD subfamily.

The catalysed reaction is N-succinyl-L-glutamate 5-semialdehyde + NAD(+) + H2O = N-succinyl-L-glutamate + NADH + 2 H(+). It functions in the pathway amino-acid degradation; L-arginine degradation via AST pathway; L-glutamate and succinate from L-arginine: step 4/5. Functionally, catalyzes the NAD-dependent reduction of succinylglutamate semialdehyde into succinylglutamate. This is N-succinylglutamate 5-semialdehyde dehydrogenase from Shewanella baltica (strain OS185).